Here is a 757-residue protein sequence, read N- to C-terminus: MMDQARSAISNLFGGEPLSYTRFSLARQVDGDNSHVEMKLAVDEEENTDNNMKASVRKHRRLNGRLCFGTIAVVIFFLIGFMIGYLGYCKRTEQKDCVRLAETETGNSEIIQEENIPQSSRLYWADLKKLLSEKLDAIEFTDTIKQLSQTSREAGSQKDENLAYYIENQFRDFKLSKVWRDEHYVKIQVKGSAAQNAVTIINVNGDSDLVENPGGYVAYSKATTVSGKLIHANFGTKKDFEDLKYPVNGSLVIVRAGKITFAEKVANAQSFNAIGVLIYMDQTKFPVVEAELSLFGHAHLGTGDPYTPGFPSFNHTQFPPSQSSGLPSIPVQTISRKAAEKLFQNMETNCPPSWNTDSLCKLESSQGINVNLSVNNVLKETRILNIFGVIKGFEEPDRYIVVGAQRDAWGPGAAKSSVGTGLLLKLAQAFSDMVSRGGFKPSRSIIFASWSAGDFGAVGATEWLEGYLSSLHLKAFTYINLDKVVLGTRNFKVSASPLLYTLIEKTMQDVRHPIDGKPLYRDSNWISKVEDLSLDNAAFPFLAYSGIPAVSFWFCENEDYPYLDTNLDTYEKLIQKVPQLNKMVRAAAEVAGQFIIKLTHDIELNLDYDMYNNKILSFVKELNQFRADIKAMGLSLQWLYSARGDFFRATSRLTTDFHNAEKTNRFVVREINNRIMKVEYHFLSPYVSPRESPFRHIFWGSGSHTLTALVENLKLRQKNSSAFNETLFRNQLALATWTIQGVANALSGDIWDIDNEF.

At 1 to 67 the chain is on the cytoplasmic side; sequence MMDQARSAIS…KHRRLNGRLC (67 aa). The mediates interaction with SH3BP4 stretch occupies residues 1–67; that stretch reads MMDQARSAIS…KHRRLNGRLC (67 aa). Residues Ser-10 and Ser-19 each carry the phosphoserine modification. Tyr-20 carries the phosphotyrosine modification. The short motif at 20–23 is the Endocytosis signal element; the sequence is YTRF. Thr-21 carries the phosphothreonine modification. Ser-24 carries the phosphoserine modification. A Stop-transfer sequence motif is present at residues 58–61; the sequence is KHRR. A lipid anchor (S-palmitoyl cysteine) is attached at Cys-67. The chain crosses the membrane as a helical; Signal-anchor for type II membrane protein span at residues 68 to 88; sequence FGTIAVVIFFLIGFMIGYLGY. Residues 89-757 are Extracellular-facing; that stretch reads CKRTEQKDCV…GDIWDIDNEF (669 aa). Thr-103 carries O-linked (GalNAc...) threonine glycosylation. The PA domain maps to 220–310; it reads SKATTVSGKL…GTGDPYTPGF (91 aa). Residues Asn-248 and Asn-314 are each glycosylated (N-linked (GlcNAc...) asparagine). The ligand-binding stretch occupies residues 566–757; it reads NLDTYEKLIQ…GDIWDIDNEF (192 aa). The short motif at 643 to 645 is the Cell attachment site element; it reads RGD. N-linked (GlcNAc...) asparagine glycans are attached at residues Asn-719 and Asn-724.

This sequence belongs to the peptidase M28 family. M28B subfamily. In terms of assembly, homodimer; disulfide-linked. Binds one transferrin molecule per subunit. Interacts with SH3BP4. Interacts with STEAP3; facilitates TFRC endocytosis in erythroid precursor cells. In terms of processing, stearoylated by ZDHHC6 which inhibits TFRC-mediated activation of the JNK pathway and promotes mitochondrial fragmentation. Stearoylation does not affect iron uptake. N- and O-glycosylated, phosphorylated and palmitoylated.

The protein resides in the cell membrane. It is found in the melanosome. Functionally, cellular uptake of iron occurs via receptor-mediated endocytosis of ligand-occupied transferrin receptor into specialized endosomes. Endosomal acidification leads to iron release. The apotransferrin-receptor complex is then recycled to the cell surface with a return to neutral pH and the concomitant loss of affinity of apotransferrin for its receptor. Transferrin receptor is necessary for development of erythrocytes and the nervous system. Positively regulates T and B cell proliferation through iron uptake. Acts as a lipid sensor that regulates mitochondrial fusion by regulating activation of the JNK pathway. When dietary levels of stearate (C18:0) are low, promotes activation of the JNK pathway, resulting in HUWE1-mediated ubiquitination and subsequent degradation of the mitofusin MFN2 and inhibition of mitochondrial fusion. When dietary levels of stearate (C18:0) are high, TFRC stearoylation inhibits activation of the JNK pathway and thus degradation of the mitofusin MFN2. Mediates uptake of NICOL1 into fibroblasts where it may regulate extracellular matrix production. The chain is Transferrin receptor protein 1 (TFRC) from Cricetulus griseus (Chinese hamster).